A 435-amino-acid polypeptide reads, in one-letter code: Glutamyl-tRNA reductase (435 aa).

Substrate contacts are provided by residues 49–52 (TCNR), S114, 119–121 (EPQ), and Q125. C50 acts as the Nucleophile in catalysis. An NADP(+)-binding site is contributed by 204 to 209 (GAGETI).

This sequence belongs to the glutamyl-tRNA reductase family. In terms of assembly, homodimer.

It catalyses the reaction (S)-4-amino-5-oxopentanoate + tRNA(Glu) + NADP(+) = L-glutamyl-tRNA(Glu) + NADPH + H(+). The protein operates within porphyrin-containing compound metabolism; protoporphyrin-IX biosynthesis; 5-aminolevulinate from L-glutamyl-tRNA(Glu): step 1/2. Functionally, catalyzes the NADPH-dependent reduction of glutamyl-tRNA(Glu) to glutamate 1-semialdehyde (GSA). In Actinobacillus succinogenes (strain ATCC 55618 / DSM 22257 / CCUG 43843 / 130Z), this protein is Glutamyl-tRNA reductase.